The chain runs to 140 residues: Large ribosomal subunit protein uL11 (140 aa).

It belongs to the universal ribosomal protein uL11 family. In terms of assembly, part of the ribosomal stalk of the 50S ribosomal subunit. Interacts with L10 and the large rRNA to form the base of the stalk. L10 forms an elongated spine to which L12 dimers bind in a sequential fashion forming a multimeric L10(L12)X complex. In terms of processing, one or more lysine residues are methylated.

In terms of biological role, forms part of the ribosomal stalk which helps the ribosome interact with GTP-bound translation factors. The sequence is that of Large ribosomal subunit protein uL11 from Syntrophobacter fumaroxidans (strain DSM 10017 / MPOB).